A 60-amino-acid polypeptide reads, in one-letter code: MKNTILLLFTAFIFLMGFFGMSADALADPKADPLAGPFPDADPDPINMKAVAAVAKKPLG.

The signal sequence occupies residues 1–27 (MKNTILLLFTAFIFLMGFFGMSADALA). AXPX repeat units follow at residues 27-30 (ADPK), 31-34 (ADPL), 35-38 (AGPF), and 41-44 (ADPD). Positions 28–45 (DPKADPLAGPFPDADPDP) are excised as a propeptide. Leu-59 is subject to Leucine amide.

Belongs to the MCD family. Mastoparan subfamily. In terms of tissue distribution, expressed by the venom gland.

Its subcellular location is the secreted. It is found in the target cell membrane. In terms of biological role, antimicrobial peptide. Shows activity against both Gram-positive and -negative bacteria, as well against fungi. Also promotes moderate mast cell degranulation. Does not show hemolytic activity on rabbit and human erythrocytes. Its mast cell degranulation activity may be related to the activation of G-protein coupled receptors in mast cells as well as interaction with other proteins located in cell endosomal membranes in the mast cells. In Vespa bicolor (Black shield wasp), this protein is Mastoparan-VB2.